Here is a 584-residue protein sequence, read N- to C-terminus: MFNLFILLLERVGLIIIIAYMLMNINHFKTMMGEREKLRSQWQLTILFALFAITSNFTGIEIENGHIVSSNIYYQLNDDASMANTRVLTIGMSGLIGGPFVAIIVGIVSGLSRLYIGGANAYTYLISSIFIALISGFYGYRTMRRYTYPTVLMGAIIGALNEAIQMACILIFANDTASAWSLVQFIALPMILINSIGTAIFLSIILSTLKQEEQTRAIQTHDVFEIANKTLPYFRSGLTEQSARSVAEIILKLMNVSAVAITNRTDILTHVGAASDHHVAKKAIITDLSKEVIKTGHLKEAHSKEEIGCNNPNCSLTSAIVIPLMINQEVAGTLKFYFTNEYENTTSTKQLARGLADIFSSQLELGQAEMQSKLLKDAEIKSLQAQVNPHFFFNSINTISALVRIDSEKARKLLLQLSQFFRSNLQGARNNTITLGKELQQVEAYLALEQARFPDRFTIQYHIDSSCKHVLIPPFVIQILVENAIKHAFKHRRKDNIIDVVAHHDNEELTLTVRDNGSGIDDDKLPLIGQMSVDSETGTGSALENLNRRLIGLYGTKAALHFESTEIGTTVSCHIPSHTIKEDI.

6 helical membrane passes run 2-22 (FNLF…AYML), 42-62 (WQLT…GIEI), 87-107 (VLTI…IVGI), 114-134 (LYIG…IALI), 152-172 (LMGA…ILIF), and 185-205 (FIAL…LSII). The region spanning 379–461 (EIKSLQAQVN…RFPDRFTIQY (83 aa)) is the Histidine kinase domain. Phosphohistidine; by autocatalysis is present on His-390.

It localises to the cell membrane. The catalysed reaction is ATP + protein L-histidine = ADP + protein N-phospho-L-histidine.. Functionally, member of the two-component regulatory system LytR/LytS that probably regulates genes involved in cell wall metabolism. This chain is Sensor protein LytS (lytS), found in Staphylococcus haemolyticus (strain JCSC1435).